The following is a 150-amino-acid chain: Non-structural protein (150 aa).

Residues 93-140 form an apoptotic activity region; that stretch reads PLFRIRFLLLIMSDSISLTDITISPGTLYSARTLLLRAAVLALTRKPM.

Functionally, disrupts the host mitochondrial membrane potential and induces apoptosis probably by inducing host CASP8 and CASP9. The protein is Non-structural protein of Bos taurus (Bovine).